The sequence spans 118 residues: Large ribosomal subunit protein bL19 (118 aa).

It belongs to the bacterial ribosomal protein bL19 family.

Its function is as follows. This protein is located at the 30S-50S ribosomal subunit interface and may play a role in the structure and function of the aminoacyl-tRNA binding site. In Marinobacter nauticus (strain ATCC 700491 / DSM 11845 / VT8) (Marinobacter aquaeolei), this protein is Large ribosomal subunit protein bL19.